A 164-amino-acid chain; its full sequence is ATP synthase subunit b (164 aa).

A helical transmembrane segment spans residues 5-25; it reads IGELIGNFILVAGSFLLLIVL.

Belongs to the ATPase B chain family. F-type ATPases have 2 components, F(1) - the catalytic core - and F(0) - the membrane proton channel. F(1) has five subunits: alpha(3), beta(3), gamma(1), delta(1), epsilon(1). F(0) has three main subunits: a(1), b(2) and c(10-14). The alpha and beta chains form an alternating ring which encloses part of the gamma chain. F(1) is attached to F(0) by a central stalk formed by the gamma and epsilon chains, while a peripheral stalk is formed by the delta and b chains.

Its subcellular location is the cell membrane. Functionally, f(1)F(0) ATP synthase produces ATP from ADP in the presence of a proton or sodium gradient. F-type ATPases consist of two structural domains, F(1) containing the extramembraneous catalytic core and F(0) containing the membrane proton channel, linked together by a central stalk and a peripheral stalk. During catalysis, ATP synthesis in the catalytic domain of F(1) is coupled via a rotary mechanism of the central stalk subunits to proton translocation. Component of the F(0) channel, it forms part of the peripheral stalk, linking F(1) to F(0). In Streptococcus gordonii (strain Challis / ATCC 35105 / BCRC 15272 / CH1 / DL1 / V288), this protein is ATP synthase subunit b.